We begin with the raw amino-acid sequence, 100 residues long: NADH-quinone oxidoreductase subunit K (100 aa).

3 helical membrane passes run 4 to 24 (LQHGLILAAILFVLGLTGLVI), 28 to 48 (LLFMLIGLEIMINAAALAFVV), and 60 to 80 (IMYILAISLAAAEASIGLALL).

This sequence belongs to the complex I subunit 4L family. As to quaternary structure, NDH-1 is composed of 13 different subunits. Subunits NuoA, H, J, K, L, M, N constitute the membrane sector of the complex.

It is found in the cell inner membrane. It carries out the reaction a quinone + NADH + 5 H(+)(in) = a quinol + NAD(+) + 4 H(+)(out). Functionally, NDH-1 shuttles electrons from NADH, via FMN and iron-sulfur (Fe-S) centers, to quinones in the respiratory chain. The immediate electron acceptor for the enzyme in this species is believed to be ubiquinone. Couples the redox reaction to proton translocation (for every two electrons transferred, four hydrogen ions are translocated across the cytoplasmic membrane), and thus conserves the redox energy in a proton gradient. In Cronobacter sakazakii (strain ATCC BAA-894) (Enterobacter sakazakii), this protein is NADH-quinone oxidoreductase subunit K.